Consider the following 1225-residue polypeptide: DNA-directed RNA polymerase subunit beta' (1225 aa).

Zn(2+)-binding residues include cysteine 60, cysteine 62, cysteine 75, and cysteine 78. Mg(2+)-binding residues include aspartate 450, aspartate 452, and aspartate 454. The Zn(2+) site is built by cysteine 818, cysteine 892, cysteine 899, and cysteine 902.

It belongs to the RNA polymerase beta' chain family. The RNAP catalytic core consists of 2 alpha, 1 beta, 1 beta' and 1 omega subunit. When a sigma factor is associated with the core the holoenzyme is formed, which can initiate transcription. Mg(2+) is required as a cofactor. Requires Zn(2+) as cofactor.

The enzyme catalyses RNA(n) + a ribonucleoside 5'-triphosphate = RNA(n+1) + diphosphate. DNA-dependent RNA polymerase catalyzes the transcription of DNA into RNA using the four ribonucleoside triphosphates as substrates. The chain is DNA-directed RNA polymerase subunit beta' from Streptococcus pneumoniae (strain Hungary19A-6).